The primary structure comprises 166 residues: Dihydrofolate reductase (166 aa).

Residues 6 to 164 (KISLIVAMDK…YDYYFHIYER (159 aa)) enclose the DHFR domain. Residue 10 to 12 (IVA) coordinates substrate. Residues 11 to 12 (VA) and 19 to 24 (IGKDND) each bind NADP(+). D32 serves as a coordination point for substrate. Residue 48 to 51 (GRKN) coordinates NADP(+). R62 provides a ligand contact to substrate. Residues 67–70 (LTRD) and 100–105 (FGGEQI) contribute to the NADP(+) site. T119 is a binding site for substrate.

Belongs to the dihydrofolate reductase family.

The catalysed reaction is (6S)-5,6,7,8-tetrahydrofolate + NADP(+) = 7,8-dihydrofolate + NADPH + H(+). It participates in cofactor biosynthesis; tetrahydrofolate biosynthesis; 5,6,7,8-tetrahydrofolate from 7,8-dihydrofolate: step 1/1. In terms of biological role, key enzyme in folate metabolism. Catalyzes an essential reaction for de novo glycine and purine synthesis, and for DNA precursor synthesis. In Staphylococcus haemolyticus, this protein is Dihydrofolate reductase (dfrD).